Reading from the N-terminus, the 189-residue chain is Interferon alpha-8 (189 aa).

An N-terminal signal peptide occupies residues 1–23 (MALTFYLLVALVVLSYKSFSSLG). 2 disulfide bridges follow: Cys24–Cys122 and Cys52–Cys162.

This sequence belongs to the alpha/beta interferon family.

Its subcellular location is the secreted. Functionally, produced by macrophages, IFN-alpha have antiviral activities. Interferon stimulates the production of two enzymes: a protein kinase and an oligoadenylate synthetase. The polypeptide is Interferon alpha-8 (IFNA8) (Homo sapiens (Human)).